The following is a 547-amino-acid chain: Phosphomethylpyrimidine synthase (547 aa).

Residues 1–15 show a composition bias toward polar residues; it reads MTETLSKTTEPSVTT. Residues 1-36 form a disordered region; it reads MTETLSKTTEPSVTTGPIPGSSKAYREVANPDGGPS. Substrate is bound by residues N150, M179, Y208, H244, 264–266, 305–308, and E344; these read SRG and DGLR. H348 contributes to the Zn(2+) binding site. Y371 contributes to the substrate binding site. H412 contacts Zn(2+). Residues C492, C495, and C500 each contribute to the [4Fe-4S] cluster site.

It belongs to the ThiC family. [4Fe-4S] cluster serves as cofactor.

It carries out the reaction 5-amino-1-(5-phospho-beta-D-ribosyl)imidazole + S-adenosyl-L-methionine = 4-amino-2-methyl-5-(phosphooxymethyl)pyrimidine + CO + 5'-deoxyadenosine + formate + L-methionine + 3 H(+). It participates in cofactor biosynthesis; thiamine diphosphate biosynthesis. Functionally, catalyzes the synthesis of the hydroxymethylpyrimidine phosphate (HMP-P) moiety of thiamine from aminoimidazole ribotide (AIR) in a radical S-adenosyl-L-methionine (SAM)-dependent reaction. This is Phosphomethylpyrimidine synthase from Mycobacterium leprae (strain Br4923).